The chain runs to 562 residues: Oxygen-dependent choline dehydrogenase (562 aa).

4 to 33 serves as a coordination point for FAD; it reads DYIIIGAGSAGNVLATRLTEDPNTTVLLLE. The active-site Proton acceptor is His-473.

The protein belongs to the GMC oxidoreductase family. Requires FAD as cofactor.

The catalysed reaction is choline + A = betaine aldehyde + AH2. It carries out the reaction betaine aldehyde + NAD(+) + H2O = glycine betaine + NADH + 2 H(+). The protein operates within amine and polyamine biosynthesis; betaine biosynthesis via choline pathway; betaine aldehyde from choline (cytochrome c reductase route): step 1/1. Functionally, involved in the biosynthesis of the osmoprotectant glycine betaine. Catalyzes the oxidation of choline to betaine aldehyde and betaine aldehyde to glycine betaine at the same rate. This is Oxygen-dependent choline dehydrogenase from Escherichia coli O45:K1 (strain S88 / ExPEC).